A 377-amino-acid polypeptide reads, in one-letter code: Transcription factor ast-1 (377 aa).

Residues 72-143 are disordered; it reads PNRMLYNDNT…SNGSSSSTES (72 aa). 2 stretches are compositionally biased toward low complexity: residues 96-109 and 118-142; these read STSA…TSSK and TESS…SSTE. A DNA-binding region (ETS) is located at residues 214 to 294; that stretch reads TQLWQFLLEL…HGKRYAYKFD (81 aa).

Belongs to the ETS family. As to expression, expressed in the A-neurons in the male-specific genital sensilla (simple sense organs) known as rays.

Its subcellular location is the nucleus. It localises to the cell projection. The protein resides in the neuron projection. Functionally, transcription factor. Probably binds to DNA sequences containing the consensus motif 5'-CGGA[AT][AG]-3'. Positively modulates expression of dopamine pathway genes, acting as a terminal selector for differentiation of dopaminergic neurons; may act in concert with homeobox proteins ceh-40, ceh-43 and ceh-20. Required for axon navigation in some interneurons, perhaps acting in the same pathways as basement membrane protein nid-1 and unc-6/netrin. Plays a role in the differentiation of the ventral cord pioneer neuron AVG. Required for morphogenesis of the pharynx. The protein is Transcription factor ast-1 of Caenorhabditis elegans.